A 200-amino-acid polypeptide reads, in one-letter code: Holliday junction branch migration complex subunit RuvA (200 aa).

The segment at 1-63 (MIASVRGVVT…EDSLTLYGFA (63 aa)) is domain I. The interval 64–142 (DDDAKALFEL…PVPVGADSAA (79 aa)) is domain II. The tract at residues 143-151 (GVTTGAWPE) is flexible linker. The segment at 151 to 200 (EQVRQALVGLGWTAAQADQAVTAVAETVDGAVPPVPVLLRQAIRLLGRTR) is domain III.

The protein belongs to the RuvA family. Homotetramer. Forms an RuvA(8)-RuvB(12)-Holliday junction (HJ) complex. HJ DNA is sandwiched between 2 RuvA tetramers; dsDNA enters through RuvA and exits via RuvB. An RuvB hexamer assembles on each DNA strand where it exits the tetramer. Each RuvB hexamer is contacted by two RuvA subunits (via domain III) on 2 adjacent RuvB subunits; this complex drives branch migration. In the full resolvosome a probable DNA-RuvA(4)-RuvB(12)-RuvC(2) complex forms which resolves the HJ.

Its subcellular location is the cytoplasm. Functionally, the RuvA-RuvB-RuvC complex processes Holliday junction (HJ) DNA during genetic recombination and DNA repair, while the RuvA-RuvB complex plays an important role in the rescue of blocked DNA replication forks via replication fork reversal (RFR). RuvA specifically binds to HJ cruciform DNA, conferring on it an open structure. The RuvB hexamer acts as an ATP-dependent pump, pulling dsDNA into and through the RuvAB complex. HJ branch migration allows RuvC to scan DNA until it finds its consensus sequence, where it cleaves and resolves the cruciform DNA. This is Holliday junction branch migration complex subunit RuvA from Salinispora tropica (strain ATCC BAA-916 / DSM 44818 / JCM 13857 / NBRC 105044 / CNB-440).